A 254-amino-acid polypeptide reads, in one-letter code: Hydroxyacylglutathione hydrolase (254 aa).

7 residues coordinate Zn(2+): histidine 52, histidine 54, aspartate 56, histidine 57, histidine 109, aspartate 126, and histidine 164.

Belongs to the metallo-beta-lactamase superfamily. Glyoxalase II family. Monomer. Zn(2+) is required as a cofactor.

It catalyses the reaction an S-(2-hydroxyacyl)glutathione + H2O = a 2-hydroxy carboxylate + glutathione + H(+). The protein operates within secondary metabolite metabolism; methylglyoxal degradation; (R)-lactate from methylglyoxal: step 2/2. In terms of biological role, thiolesterase that catalyzes the hydrolysis of S-D-lactoyl-glutathione to form glutathione and D-lactic acid. The chain is Hydroxyacylglutathione hydrolase from Stenotrophomonas maltophilia (strain R551-3).